Consider the following 307-residue polypeptide: Fructokinase (307 aa).

The protein belongs to the carbohydrate kinase PfkB family.

The enzyme catalyses D-fructose + ATP = D-fructose 6-phosphate + ADP + H(+). The protein is Fructokinase (scrK) of Salmonella typhimurium.